Consider the following 255-residue polypeptide: 5'-nucleotidase SurE (255 aa).

Residues Asp11, Asp12, Ser43, and Asn99 each coordinate a divalent metal cation.

The protein belongs to the SurE nucleotidase family. A divalent metal cation serves as cofactor.

It localises to the cytoplasm. The enzyme catalyses a ribonucleoside 5'-phosphate + H2O = a ribonucleoside + phosphate. Nucleotidase that shows phosphatase activity on nucleoside 5'-monophosphates. The chain is 5'-nucleotidase SurE from Caldanaerobacter subterraneus subsp. tengcongensis (strain DSM 15242 / JCM 11007 / NBRC 100824 / MB4) (Thermoanaerobacter tengcongensis).